The chain runs to 453 residues: Dibenzothiophene-sulfone monooxygenase (453 aa).

Residues aspartate 59, threonine 106, histidine 156, tyrosine 160, and serine 231 each contribute to the FMN site.

It belongs to the NtaA/SnaA/DszA monooxygenase family. As to quaternary structure, homodimer.

It is found in the cytoplasm. It carries out the reaction dibenzothiophene 5,5-dioxide + FMNH2 + NADH + O2 = 2'-hydroxybiphenyl-2-sulfinate + FMN + NAD(+) + H2O + H(+). The protein operates within sulfur metabolism; dibenzothiophene degradation. Its function is as follows. Catalyzes the second step of the '4S' desulfurization pathway that removes covalently bound sulfur from dibenzothiophene (DBT) without breaking carbon-carbon bonds. Metabolizes DBT-sulfone (DBTO2 or DBT 5,5-dioxide) to 2-(2'-hydroxyphenyl)benzene sulphinate (HBPS). The chain is Dibenzothiophene-sulfone monooxygenase from Rhodococcus erythropolis (Arthrobacter picolinophilus).